Consider the following 277-residue polypeptide: DNA-binding transcriptional activator MhpR (277 aa).

An HTH iclR-type domain is found at Val12 to Ile74. The segment at residues Val34–Glu53 is a DNA-binding region (H-T-H motif). The 174-residue stretch at Ile89–Ser262 folds into the IclR-ED domain.

In terms of biological role, activator of the mhpABCDFE operon coding for components of the 3-hydroxyphenylpropionate degradation pathway. The polypeptide is DNA-binding transcriptional activator MhpR (mhpR) (Escherichia coli (strain K12)).